Here is a 396-residue protein sequence, read N- to C-terminus: MRVNDSPSDEVYQTRLQGAQTAMKRAGIDVLALSGPDFHNYFAGLWGLPVGRPVWFVLQQYGKPAFVAPRSEAREISARCKTPVAVEWVEWEGPIAAPMTNQDALAQYTRGIAPNPGLIGLDFNCTSGANVELVRQALGAEHIKDVTPMLQELWACKDAAGIAAIRQSCDIVREQFLACRNAIAPGIPEWKVTLASVTAAIERNGELLAEDEELPRFWPHQLNMVGSGADRTARCHPSGGGRIMQDGAIAQICLCGQTFRGHAACFDRPVPIGSKPLPANLRKVIDVAREAQSAALAALRPGVTAGEIHAAAVAVIKRSGWEAPFLHRTGRGIGYSDWDGIELKAGSQTVLEVGNVLSIEPGVYVQGIGGARFGDTVLVSETGYEVLTPFDLGRNI.

It belongs to the peptidase M24B family.

The chain is Agropine synthesis cyclase (ags) from Rhizobium rhizogenes (Agrobacterium rhizogenes).